Consider the following 223-residue polypeptide: Histone H1.5 (223 aa).

A compositionally biased stretch (low complexity) spans 1-14 (MSETAPAETAAPAP). Residues 1–56 (MSETAPAETAAPAPVEKSPAKKKTTKKAGAAKRKATGPPVSELITKAVSASKERGG) form a disordered region. Ser-2 bears the N-acetylserine mark. Ser-2 is modified (phosphoserine). Position 17 is an N6-acetyllysine (Lys-17). The residue at position 18 (Ser-18) is a Phosphoserine. Residues 20–35 (AKKKTTKKAGAAKRKA) are compositionally biased toward basic residues. Lys-27 is subject to N6-methyllysine. Lys-34 is modified (N6-(beta-hydroxybutyryl)lysine; alternate). An N6-succinyllysine; alternate modification is found at Lys-34. Thr-36 is modified (phosphothreonine). The region spanning 36–109 (TGPPVSELIT…GASGSFKLNK (74 aa)) is the H15 domain. Residue Lys-46 is modified to N6-acetyllysine. The residue at position 52 (Lys-52) is an N6-(beta-hydroxybutyryl)lysine. At Arg-54 the chain carries Citrulline. Residue Lys-64 is modified to N6-(beta-hydroxybutyryl)lysine. Lys-75 is modified (N6-acetyllysine). An N6-(beta-hydroxybutyryl)lysine mark is found at Lys-85, Lys-90, and Lys-106. A disordered region spans residues 91-223 (GTLVQTKGTG…KAKKAVSKKK (133 aa)). Basic residues predominate over residues 119–130 (KAKKTGAAKAKK). 2 positions are modified to phosphothreonine: Thr-135 and Thr-152. The span at 137–158 (KKPKKTAGAKKTVKKTPKKAKK) shows a compositional bias: basic residues. Lys-165 bears the N6-acetyllysine mark. Residues 166–184 (KVAKSPKKAKAAAKPKKAA) are compositionally biased toward basic residues. Phosphoserine is present on residues Ser-170 and Ser-186. Positions 191 to 223 (KAVKSKASKPKVTKPKTAKPKAAKAKKAVSKKK) are enriched in basic residues.

The protein belongs to the histone H1/H5 family. In terms of assembly, interacts with MSX1. In terms of processing, H1 histones are progressively phosphorylated during the cell cycle, becoming maximally phosphorylated during late G2 phase and M phase, and being dephosphorylated sharply thereafter. Citrullination at Arg-54 (H1R54ci) by PADI4 takes place within the DNA-binding site of H1 and results in its displacement from chromatin and global chromatin decondensation, thereby promoting pluripotency and stem cell maintenance. Post-translationally, hydroxybutyrylation of histones is induced by starvation.

The protein localises to the nucleus. Its subcellular location is the chromosome. Functionally, histone H1 protein binds to linker DNA between nucleosomes forming the macromolecular structure known as the chromatin fiber. Histones H1 are necessary for the condensation of nucleosome chains into higher-order structured fibers. Also acts as a regulator of individual gene transcription through chromatin remodeling, nucleosome spacing and DNA methylation. The sequence is that of Histone H1.5 (H1-5) from Mus musculus (Mouse).